Reading from the N-terminus, the 296-residue chain is Tubulin polyglutamylase complex subunit 2 (296 aa).

Residues 254 to 265 (SKNKILIPKKKG) are compositionally biased toward basic residues. Residues 254–296 (SKNKILIPKKKGPVPPASGQKGPGPLPPPTSKPTTGSGNPVRK) are disordered. Positions 285 to 296 (KPTTGSGNPVRK) are enriched in low complexity.

Part of the neuronal tubulin polyglutamylase complex which contains TPGS1, TPGS2, TTLL1, LRRC49 and NICN1. Interacts with CSTPP1 and LRRC49.

The protein resides in the cytoplasm. It is found in the cytoskeleton. Its subcellular location is the microtubule organizing center. It localises to the centrosome. The protein localises to the centriolar satellite. In terms of biological role, subunit of the tubulin polyglutamylase complex (TPGC). The complex mediates cilia and flagella polyglutamylation which is essential for their biogenesis and motility. The polypeptide is Tubulin polyglutamylase complex subunit 2 (Tpgs2) (Mus musculus (Mouse)).